Consider the following 428-residue polypeptide: Gamma-glutamyl phosphate reductase (428 aa).

It belongs to the gamma-glutamyl phosphate reductase family.

Its subcellular location is the cytoplasm. It catalyses the reaction L-glutamate 5-semialdehyde + phosphate + NADP(+) = L-glutamyl 5-phosphate + NADPH + H(+). It functions in the pathway amino-acid biosynthesis; L-proline biosynthesis; L-glutamate 5-semialdehyde from L-glutamate: step 2/2. In terms of biological role, catalyzes the NADPH-dependent reduction of L-glutamate 5-phosphate into L-glutamate 5-semialdehyde and phosphate. The product spontaneously undergoes cyclization to form 1-pyrroline-5-carboxylate. The sequence is that of Gamma-glutamyl phosphate reductase from Chromohalobacter salexigens (strain ATCC BAA-138 / DSM 3043 / CIP 106854 / NCIMB 13768 / 1H11).